The sequence spans 57 residues: DELTA-limacoditoxin(2)-Dv11 (57 aa).

The first 24 residues, 1 to 24 (MKFAKTFLLLFVVLLLLSIVMAEP), serve as a signal peptide directing secretion.

This sequence belongs to the limacoditoxin-2 (cecropin-like) family. As to expression, expressed by the venom secretory cell of the spine. The spine is a cuticular structure containing a single large nucleated venom-secreting cell at its base. It is an independent unit capable of producing, storing and injecting venom. On the back of D.vulnerans caterpillars, spines are grouped together by 50 to 100 to form scoli, of which there are eight in D.vulnerans.

The protein localises to the secreted. In terms of biological role, peptide that induces pain in mammals and has insecticidal, antibacterial and antiparasitic activities. Induces partially reversible paralysis in D.melanogaster when tested at high doses. Shows a moderate antiparasitic activity against the major pathogenic nematode of ruminants (H.contortus, EC(50)=30.5 uM). Has potent or moderate antibacterial activities against A.baumannii (MIC&lt;0.25 ug/mL) and S.aureus (MIC=16 ug/mL). Has no activity on the other bacteria tested, nor on the fungus C.albicans. Strongly induces the increase of intracellular calcium in mice DRG neurons, which is a proxy for neuronal activation that would occur during nociception. This increase is due to influx of extracellular calcium, suggesting that the peptide forms pore or channel in neuronal cell membranes. In addition, intraplantar injection in mice provokes nocifensive behavior, suggesting a pain-inducing activity. In Doratifera vulnerans (Mottled cup moth), this protein is DELTA-limacoditoxin(2)-Dv11.